Consider the following 316-residue polypeptide: N-acetylmuramic acid 6-phosphate etherase (316 aa).

The SIS domain occupies 68–231 (ITDRLRSGGR…STCAMVRLGK (164 aa)). E96 functions as the Proton donor in the catalytic mechanism. The active site involves E127.

Belongs to the GCKR-like family. MurNAc-6-P etherase subfamily. Homodimer.

The enzyme catalyses N-acetyl-D-muramate 6-phosphate + H2O = N-acetyl-D-glucosamine 6-phosphate + (R)-lactate. It participates in amino-sugar metabolism; N-acetylmuramate degradation. Its function is as follows. Specifically catalyzes the cleavage of the D-lactyl ether substituent of MurNAc 6-phosphate, producing GlcNAc 6-phosphate and D-lactate. The sequence is that of N-acetylmuramic acid 6-phosphate etherase from Prochlorococcus marinus (strain MIT 9313).